The following is a 207-amino-acid chain: Prolactin (207 aa).

Positions 1 to 20 (KSRLYFAVTVLMCAFVSING) are cleaved as a signal peptide. Disulfide bonds link C66–C180 and C197–C207.

It belongs to the somatotropin/prolactin family. As to expression, pituitary gland.

Its subcellular location is the secreted. This chain is Prolactin (prl), found in Hypophthalmichthys molitrix (Silver carp).